Reading from the N-terminus, the 425-residue chain is Adenosylhomocysteinase (425 aa).

Residues threonine 60, aspartate 132, and glutamate 157 each contribute to the substrate site. Residue 158 to 160 (TTT) participates in NAD(+) binding. 2 residues coordinate substrate: lysine 187 and aspartate 191. NAD(+) contacts are provided by residues asparagine 192, 221 to 226 (GYGWCG), glutamate 244, asparagine 279, 300 to 302 (SGH), and asparagine 347.

This sequence belongs to the adenosylhomocysteinase family. Requires NAD(+) as cofactor.

The protein resides in the cytoplasm. The catalysed reaction is S-adenosyl-L-homocysteine + H2O = L-homocysteine + adenosine. It functions in the pathway amino-acid biosynthesis; L-homocysteine biosynthesis; L-homocysteine from S-adenosyl-L-homocysteine: step 1/1. May play a key role in the regulation of the intracellular concentration of adenosylhomocysteine. This chain is Adenosylhomocysteinase, found in Nostoc sp. (strain PCC 7120 / SAG 25.82 / UTEX 2576).